The primary structure comprises 261 residues: Glucose 1-dehydrogenase 3 (261 aa).

NAD(+) is bound at residue 11–35; sequence VITGGSTGLGRAMAVRFGQEEAKVV. A substrate-binding site is contributed by S145. The Proton acceptor role is filled by Y158.

The protein belongs to the short-chain dehydrogenases/reductases (SDR) family. As to quaternary structure, homotetramer.

It carries out the reaction D-glucose + NAD(+) = D-glucono-1,5-lactone + NADH + H(+). The catalysed reaction is D-glucose + NADP(+) = D-glucono-1,5-lactone + NADPH + H(+). This Priestia megaterium (Bacillus megaterium) protein is Glucose 1-dehydrogenase 3 (gdhIII).